We begin with the raw amino-acid sequence, 443 residues long: Thymidine phosphorylase (443 aa).

This sequence belongs to the thymidine/pyrimidine-nucleoside phosphorylase family. Homodimer.

The catalysed reaction is thymidine + phosphate = 2-deoxy-alpha-D-ribose 1-phosphate + thymine. It participates in pyrimidine metabolism; dTMP biosynthesis via salvage pathway; dTMP from thymine: step 1/2. Its function is as follows. The enzymes which catalyze the reversible phosphorolysis of pyrimidine nucleosides are involved in the degradation of these compounds and in their utilization as carbon and energy sources, or in the rescue of pyrimidine bases for nucleotide synthesis. This Shewanella sp. (strain MR-4) protein is Thymidine phosphorylase.